The primary structure comprises 130 residues: Methylglyoxal synthase (130 aa).

Residues 1–130 (MSKPRIALIA…DLARNMQDVC (130 aa)) form the MGS-like domain. Substrate-binding positions include His11, Lys15, 37–40 (TGTT), and 57–58 (SG). The active-site Proton donor/acceptor is Asp63. Substrate is bound at residue His90.

Belongs to the methylglyoxal synthase family.

It carries out the reaction dihydroxyacetone phosphate = methylglyoxal + phosphate. Functionally, catalyzes the formation of methylglyoxal from dihydroxyacetone phosphate. This chain is Methylglyoxal synthase, found in Burkholderia orbicola (strain AU 1054).